We begin with the raw amino-acid sequence, 54 residues long: Large ribosomal subunit protein bL33 (54 aa).

Belongs to the bacterial ribosomal protein bL33 family.

The protein is Large ribosomal subunit protein bL33 of Thermus thermophilus (strain ATCC BAA-163 / DSM 7039 / HB27).